A 416-amino-acid polypeptide reads, in one-letter code: Choline/ethanolaminephosphotransferase 1 (416 aa).

The disordered stretch occupies residues 1–20 (MSGHRSTRKRCGDSHPESPV). The residue at position 18 (Ser18) is a Phosphoserine. The residue at position 40 (Thr40) is a Phosphothreonine. Residue Asn86 participates in CDP-choline binding. Helical transmembrane passes span 89–108 (TIIG…FYCP) and 116–133 (LWAY…QSLD). Asp133 provides a ligand contact to Mg(2+). N-linked (GlcNAc...) asparagine glycosylation is present at Asn144. Glu151 lines the CDP-choline pocket. Asp154 is a binding site for Mg(2+). His155 acts as the Proton acceptor in catalysis. Helical transmembrane passes span 156–176 (GCDS…VQLG), 180–199 (DWMF…AHWQ), 210–230 (IIDV…AVIG), 246–267 (MKIF…NYFR), 286–306 (VLSP…IYKK), 315–334 (HPCL…TNKL), 349–363 (TAFI…DQYF), and 368–388 (DEYI…IRYC). Mg(2+) is bound at residue Asp158.

This sequence belongs to the CDP-alcohol phosphatidyltransferase class-I family. Homodimer. Mg(2+) serves as cofactor. The cofactor is Mn(2+). In terms of tissue distribution, ubiquitously expressed.

It localises to the endoplasmic reticulum membrane. Its subcellular location is the nucleus membrane. It catalyses the reaction CDP-ethanolamine + a 1,2-diacyl-sn-glycerol = a 1,2-diacyl-sn-glycero-3-phosphoethanolamine + CMP + H(+). It carries out the reaction CDP-choline + a 1,2-diacyl-sn-glycerol = a 1,2-diacyl-sn-glycero-3-phosphocholine + CMP + H(+). The catalysed reaction is 1-O-alkyl-2-acyl-sn-glycerol + CDP-choline = a 1-O-alkyl-2-acyl-sn-glycero-3-phosphocholine + CMP + H(+). The enzyme catalyses a 1-O-(1Z-alkenyl)-2-acyl-sn-glycerol + CDP-choline = a 1-O-(1Z-alkenyl)-2-acyl-sn-glycero-3-phosphocholine + CMP + H(+). It catalyses the reaction 1,2-dioctanoyl-sn-glycerol + CDP-choline = 1,2-dioctanoyl-sn-glycero-3-phosphocholine + CMP + H(+). It carries out the reaction 1,2-didecanoyl-sn-glycerol + CDP-choline = 1,2-didecanoyl-sn-glycero-3-phosphocholine + CMP + H(+). The catalysed reaction is CDP-choline + 1,2-di-(9Z-octadecenoyl)-sn-glycerol = 1,2-di-(9Z-octadecenoyl)-sn-glycero-3-phosphocholine + CMP + H(+). The enzyme catalyses 1-hexadecanoyl-2-(9Z-octadecenoyl)-sn-glycerol + CDP-choline = 1-hexadecanoyl-2-(9Z-octadecenoyl)-sn-glycero-3-phosphocholine + CMP + H(+). It catalyses the reaction CDP-ethanolamine + 1,2-di-(9Z-octadecenoyl)-sn-glycerol = 1,2-di-(9Z-octadecenoyl)-sn-glycero-3-phosphoethanolamine + CMP + H(+). It carries out the reaction 1-hexadecanoyl-2-(9Z-octadecenoyl)-sn-glycerol + CDP-ethanolamine = 1-hexadecanoyl-2-(9Z-octadecenoyl)-sn-glycero-3-phosphoethanolamine + CMP + H(+). The catalysed reaction is 1-hexadecanoyl-2-(4Z,7Z,10Z,13Z,16Z,19Z-docosahexaenoyl)-sn-glycerol + CDP-choline = 1-hexadecanoyl-2-(4Z,7Z,10Z,13Z,16Z,19Z-docosahexaenoyl)-sn-glycero-3-phosphocholine + CMP + H(+). The enzyme catalyses 1,2-di-(9Z-hexadecenoyl)-sn-glycerol + CDP-choline = 1,2-di-(9Z-hexadecenoyl)-sn-glycero-3-phosphocholine + CMP + H(+). It catalyses the reaction 1,2-di-(9Z-hexadecenoyl)-sn-glycerol + CDP-ethanolamine = 1,2-di-(9Z-hexadecenoyl)-sn-glycero-3-phosphoethanolamine + CMP + H(+). It carries out the reaction 1-O-hexadecyl-2-acetyl-sn-glycerol + CDP-choline = 1-O-hexadecyl-2-acetyl-sn-glycero-3-phosphocholine + CMP + H(+). The catalysed reaction is 1-O-hexadecyl-2-(5Z,8Z,11Z,14Z-eicosatetraenoyl)-sn-glycerol + CDP-choline = 1-O-hexadecyl-2-(5Z,8Z,11Z,14Z)-eicosatetraenoyl-sn-glycero-3-phosphocholine + CMP + H(+). It functions in the pathway phospholipid metabolism; phosphatidylethanolamine biosynthesis; phosphatidylethanolamine from ethanolamine: step 3/3. The protein operates within phospholipid metabolism; phosphatidylcholine biosynthesis; phosphatidylcholine from phosphocholine: step 2/2. In terms of biological role, catalyzes both phosphatidylcholine and phosphatidylethanolamine biosynthesis from CDP-choline and CDP-ethanolamine, respectively. Involved in protein-dependent process of phospholipid transport to distribute phosphatidyl choline to the lumenal surface. Has a higher cholinephosphotransferase activity than ethanolaminephosphotransferase activity. The polypeptide is Choline/ethanolaminephosphotransferase 1 (Homo sapiens (Human)).